A 532-amino-acid polypeptide reads, in one-letter code: Optineurin (532 aa).

Coiled-coil stretches lie at residues 27 to 143 (SMKN…LKLG) and 195 to 466 (EEVA…EEMM). A CCHC NOA-type zinc finger spans residues 502-532 (QPSITVYTCPKCNLTVPDMDTLQIHVMDCIT). Zn(2+) is bound by residues cysteine 510, cysteine 513, histidine 526, and cysteine 530.

The protein localises to the cytoplasm. It is found in the perinuclear region. It localises to the golgi apparatus. Its subcellular location is the trans-Golgi network. The protein resides in the cytoplasmic vesicle. The protein localises to the recycling endosome. It is found in the autophagosome. Its function is as follows. Probably part of the TNF-alpha signaling pathway that can shift the equilibrium toward induction of cell death. May act by regulating membrane trafficking and cellular morphogenesis. This Xenopus laevis (African clawed frog) protein is Optineurin (optn).